A 780-amino-acid polypeptide reads, in one-letter code: LPS-assembly protein LptD (780 aa).

An N-terminal signal peptide occupies residues 1–24 (MKKRFPTLLATLIWTALYSQHTLA).

The protein belongs to the LptD family. Component of the lipopolysaccharide transport and assembly complex. Interacts with LptE and LptA.

It is found in the cell outer membrane. In terms of biological role, together with LptE, is involved in the assembly of lipopolysaccharide (LPS) at the surface of the outer membrane. The polypeptide is LPS-assembly protein LptD (Yersinia pseudotuberculosis serotype I (strain IP32953)).